The chain runs to 571 residues: Glutamate--tRNA ligase (571 aa).

Residues 75–88 (GGPREDVARDKEGL) are compositionally biased toward basic and acidic residues. Residues 75–98 (GGPREDVARDKEGLKPLPGAEPGN) are disordered. Positions 105–115 (PNPSGPLHIGH) match the 'HIGH' region motif.

Belongs to the class-I aminoacyl-tRNA synthetase family. Glutamate--tRNA ligase type 2 subfamily.

Its subcellular location is the cytoplasm. It carries out the reaction tRNA(Glu) + L-glutamate + ATP = L-glutamyl-tRNA(Glu) + AMP + diphosphate. Catalyzes the attachment of glutamate to tRNA(Glu) in a two-step reaction: glutamate is first activated by ATP to form Glu-AMP and then transferred to the acceptor end of tRNA(Glu). This Methanopyrus kandleri (strain AV19 / DSM 6324 / JCM 9639 / NBRC 100938) protein is Glutamate--tRNA ligase.